The chain runs to 417 residues: Lissencephaly-1 homolog (417 aa).

Positions 7–39 (QKEELNRAIADYLFANGYVKALNAFREESQLAG) constitute a LisH domain. A coiled-coil region spans residues 54 to 86 (TSVIRLQKKVMDLEAKLNEAEKEFQSMQNAIGF). WD repeat units follow at residues 120–159 (GHRSPITRVLFHPHYNVFVSASEDASIKVWDYETGEFEHT), 162–203 (GHTD…KTLT), 204–243 (GHDHNVSSVAFLPSGDFLVSASRDKTIKMWEVSTGYCTKT), 246–285 (GHTEWIRSVRPSPEGNLLASCSNDHTIRIWSVESRECQVV), 288–340 (GHEH…CLFV), 343–382 (GHDNWVRQLVFHPHGRLLLSASDDKTIRVWDLKNRRCHKT), and 385–417 (AHSHFVTSLDVNRLAPYAITGSVDQTIHIWDCR).

The protein belongs to the WD repeat LIS1/nudF family.

The protein localises to the cytoplasm. Its subcellular location is the cytoskeleton. It localises to the microtubule organizing center. The protein resides in the centrosome. Positively regulates the activity of the minus-end directed microtubule motor protein dynein. May enhance dynein-mediated microtubule sliding by targeting dynein to the microtubule plus end. Required for several dynein- and microtubule-dependent processes. The protein is Lissencephaly-1 homolog of Schistosoma mansoni (Blood fluke).